The primary structure comprises 166 residues: Co-chaperone protein HscB homolog (166 aa).

Residues 3–75 (QYFTLFRIEP…IDRAAYLLKT (73 aa)) form the J domain.

It belongs to the HscB family. Interacts with HscA and stimulates its ATPase activity.

In terms of biological role, co-chaperone involved in the maturation of iron-sulfur cluster-containing proteins. Seems to help targeting proteins to be folded toward HscA. The polypeptide is Co-chaperone protein HscB homolog (Neisseria gonorrhoeae (strain NCCP11945)).